The following is a 635-amino-acid chain: Threonine--tRNA ligase (635 aa).

The region spanning 1–61 (MIVITLPDGS…EGDARLAIVT (61 aa)) is the TGS domain. Residues 242–533 (DHRKLGRELD…LIEQHAGALP (292 aa)) form a catalytic region. Residues Cys-333, His-384, and His-510 each contribute to the Zn(2+) site.

This sequence belongs to the class-II aminoacyl-tRNA synthetase family. In terms of assembly, homodimer. The cofactor is Zn(2+).

It localises to the cytoplasm. It carries out the reaction tRNA(Thr) + L-threonine + ATP = L-threonyl-tRNA(Thr) + AMP + diphosphate + H(+). Its function is as follows. Catalyzes the attachment of threonine to tRNA(Thr) in a two-step reaction: L-threonine is first activated by ATP to form Thr-AMP and then transferred to the acceptor end of tRNA(Thr). Also edits incorrectly charged L-seryl-tRNA(Thr). The polypeptide is Threonine--tRNA ligase (Methylibium petroleiphilum (strain ATCC BAA-1232 / LMG 22953 / PM1)).